The following is a 632-amino-acid chain: Pentatricopeptide repeat-containing protein ELI1, chloroplastic (632 aa).

Residues 1–19 (MASSPLLATSLPQNQLSTT) constitute a chloroplast transit peptide. PPR repeat units lie at residues 94 to 128 (DLFLFTAAINTASINGLKDQAFLLYVQLLSSEINP), 129 to 159 (NEFTFSSLLKSCSTKSGKLIHTHVLKFGLGI), 160 to 194 (DPYVATGLVDVYAKGGDVVSAQKVFDRMPERSLVS), 196 to 221 (TAMITCYAKQGNVEAARALFDSMCER), 222 to 256 (DIVSWNVMIDGYAQHGFPNDALMLFQKLLAEGKPK), 258 to 292 (DEITVVAALSACSQIGALETGRWIHVFVKSSRIRL), 293 to 323 (NVKVCTGLIDMYSKCGSLEEAVLVFNDTPRK), 324 to 354 (DIVAWNAMIAGYAMHGYSQDALRLFNEMQGI), 360 to 395 (TDITFIGTLQACAHAGLVNEGIRIFESMGQEYGIKP), and 396 to 426 (KIEHYGCLVSLLGRAGQLKRAYETIKNMNMD). The tract at residues 431 to 506 (LWSSVLGSCK…EPGISTIEIE (76 aa)) is type E motif. The required for function in RNA editing stretch occupies residues 497-512 (EPGISTIEIENKVHEF). Residues 507 to 537 (NKVHEFRAGDREHSKSKEIYTMLRKISERIK) are type E(+) motif. Positions 538–632 (SHGYVPNTNT…DGSCSCGDFW (95 aa)) are type DYW motif.

It belongs to the PPR family. PCMP-H subfamily. Zn(2+) is required as a cofactor.

It localises to the plastid. It is found in the chloroplast. Plays a major role in single RNA editing events in chloroplasts. Acts as a site-recognition transacting factor involved in the edition of the site 5 of ndhB1 and ndhB2 (ndhB1-5 and ndhB2-5 sites corresponding to cytidine-830), which are plastid-encoded subunits of the NADH-plastoquinone oxidoreductase. May provide the catalytic activity for editing site conversion. This is Pentatricopeptide repeat-containing protein ELI1, chloroplastic from Arabidopsis thaliana (Mouse-ear cress).